We begin with the raw amino-acid sequence, 823 residues long: Fibroblast growth factor receptor 2 (823 aa).

The signal sequence occupies residues 1-23 (MVSWDSGCLICLVVVTMAGLSLA). Over 24–379 (RPSFNLVVED…EFPTSPDYLE (356 aa)) the chain is Extracellular. The Ig-like C2-type 1 domain occupies 27-128 (FNLVVEDATL…DTLYFIVNVT (102 aa)). The cysteines at positions 65 and 110 are disulfide-linked. Residues N86, N126, and N148 are each glycosylated (N-linked (GlcNAc...) asparagine). 2 consecutive Ig-like C2-type domains span residues 156 to 249 (PYWT…YHLD) and 258 to 360 (PILQ…AWLT). Residues 163–180 (KMEKRLHAVPAANTVKFR) form a heparin-binding region. A disulfide bridge links C181 with C233. N230, N243, N267, N299, N320, and N333 each carry an N-linked (GlcNAc...) asparagine glycan. A disulfide bond links C280 and C344. Residues 380-400 (IAIYCIGVFLIACMVLTVILC) form a helical membrane-spanning segment. At 401–823 (RMKNTTKKPD…YQHMNGSVKT (423 aa)) the chain is on the cytoplasmic side. The residue at position 468 (Y468) is a Phosphotyrosine; by autocatalysis. The region spanning 483–772 (LTLGKPLGEG…LTLTTNEEYL (290 aa)) is the Protein kinase domain. ATP contacts are provided by residues 489–497 (LGEGCFGQV), K519, 567–569 (EYA), and N573. Y588 is modified (phosphotyrosine; by autocatalysis). Catalysis depends on D628, which acts as the Proton acceptor. Residues Y658, Y659, and Y771 each carry the phosphotyrosine; by autocatalysis modification.

The protein belongs to the protein kinase superfamily. Tyr protein kinase family. Fibroblast growth factor receptor subfamily. As to quaternary structure, monomer. Homodimer after ligand binding. Autophosphorylated. Binding of FGF family members together with heparan sulfate proteoglycan or heparin promotes receptor dimerization and autophosphorylation on tyrosine residues. Autophosphorylation occurs in trans between the two FGFR molecules present in the dimer. Post-translationally, N-glycosylated in the endoplasmic reticulum. The N-glycan chains undergo further maturation to an Endo H-resistant form in the Golgi apparatus. In terms of processing, ubiquitinated. FGFR2 is rapidly ubiquitinated after autophosphorylation, leading to internalization and degradation. Subject to degradation both in lysosomes and by the proteasome.

The protein localises to the cell membrane. The protein resides in the golgi apparatus. It localises to the cytoplasmic vesicle. The catalysed reaction is L-tyrosyl-[protein] + ATP = O-phospho-L-tyrosyl-[protein] + ADP + H(+). Present in an inactive conformation in the absence of bound ligand. Ligand binding leads to dimerization and activation by autophosphorylation on tyrosine residues. Functionally, tyrosine-protein kinase that acts as a cell-surface receptor for fibroblast growth factors and plays an essential role in the regulation of cell proliferation, differentiation, migration and apoptosis, and in the regulation of embryonic development. Required for normal embryonic patterning, limb bud development, lung morphogenesis, osteogenesis and skin development. Plays an essential role in the regulation of osteoblast differentiation, proliferation and apoptosis, and is required for normal skeleton development. Promotes cell proliferation in keratinocytes and immature osteoblasts, but promotes apoptosis in differentiated osteoblasts. Phosphorylates PLCG1, FRS2 and PAK4. Ligand binding leads to the activation of several signaling cascades. Activation of PLCG1 leads to the production of the cellular signaling molecules diacylglycerol and inositol 1,4,5-trisphosphate. Phosphorylation of FRS2 triggers recruitment of GRB2, GAB1, PIK3R1 and SOS1, and mediates activation of RAS, MAPK1/ERK2, MAPK3/ERK1 and the MAP kinase signaling pathway, as well as of the AKT1 signaling pathway. FGFR2 signaling is down-regulated by ubiquitination, internalization and degradation. Mutations that lead to constitutive kinase activation or impair normal FGFR2 maturation, internalization and degradation lead to aberrant signaling. Over-expressed FGFR2 promotes activation of STAT1. This is Fibroblast growth factor receptor 2 (FGFR2) from Gallus gallus (Chicken).